The following is a 500-amino-acid chain: MNLIKLFIICCLLISITVKSFEIENDIDIDFEFDNSFDQSSSSAGSGSDSYDQDKCKGKPNPYPIFNKEPIFIASTANGKLYKTGDDSNQVSILHLYGEAYEMGYAHGTLLKEQVNELIPKFMEFAEIAIKEFIKTKFALRLPEFLIKLIEEFGVNAALDYVASATEQFTPKRFFNELLGLSDSSGIPYQTLLRMHMFPELVKATCSIVGAWSEATINGGLLQVRALDWGLENPLVNYPTLIVYHPQENDGGEFSILSWTSFIGALTGYSQRTGVCEKVWLSYNGTYTHNGMPFYFILRDILQYDNSIYEALNRIYNTPRTCAVYLGVGSNESNTASLLEVSMDVVRVFDDETPFPGFAPPVPEHPLFKDVVYVDKHSQPSTDPCMANSLSQSWSEITAQTLINTMGQMETGDLHSAVYDFKQNLVYVSVATTNIPFPFTNETLPLVSPAYKNQFIQFNMTKLFSEQPPLPPPNNSSSSDSNSNSNSDSSSSSDSNSNSN.

Residues 1–20 (MNLIKLFIICCLLISITVKS) form the signal peptide. N-linked (GlcNAc...) asparagine glycosylation is found at Asn284, Asn331, Asn441, Asn459, Asn474, and Asn475. Residues 464 to 500 (FSEQPPLPPPNNSSSSDSNSNSNSDSSSSSDSNSNSN) form a disordered region. Low complexity predominate over residues 475–500 (NSSSSDSNSNSNSDSSSSSDSNSNSN).

Its subcellular location is the secreted. This Dictyostelium discoideum (Social amoeba) protein is Protein dcd1B (dcd1B).